The chain runs to 352 residues: Peptide chain release factor 1 (352 aa).

Residue glutamine 229 is modified to N5-methylglutamine.

The protein belongs to the prokaryotic/mitochondrial release factor family. Methylated by PrmC. Methylation increases the termination efficiency of RF1.

It localises to the cytoplasm. In terms of biological role, peptide chain release factor 1 directs the termination of translation in response to the peptide chain termination codons UAG and UAA. This Acidiphilium cryptum (strain JF-5) protein is Peptide chain release factor 1.